The following is a 116-amino-acid chain: Protein Wnt-5b (116 aa).

Serine 1 is lipidated: O-palmitoleoyl serine; by PORCN. Asparagine 69 and asparagine 83 each carry an N-linked (GlcNAc...) asparagine glycan. An intrachain disulfide couples cysteine 82 to cysteine 97.

It belongs to the Wnt family. In terms of processing, palmitoleoylation is required for efficient binding to frizzled receptors. Depalmitoleoylation leads to Wnt signaling pathway inhibition.

The protein resides in the secreted. The protein localises to the extracellular space. It localises to the extracellular matrix. Ligand for members of the frizzled family of seven transmembrane receptors. Probable developmental protein. May be a signaling molecule which affects the development of discrete regions of tissues. Is likely to signal over only few cell diameters. This chain is Protein Wnt-5b (WNT-5B), found in Plethodon jordani (Red-cheeked salamander).